Reading from the N-terminus, the 680-residue chain is Leucine-rich repeat and calponin homology domain-containing protein 4 (680 aa).

Residues 1–22 (MAAAVAGPLAAGGEEAAASVSL) are compositionally biased toward low complexity. The disordered stretch occupies residues 1–35 (MAAAVAGPLAAGGEEAAASVSLPGSPGLPGSRSAE). LRR repeat units lie at residues 41-64 (AVAT…AARS), 67-90 (LSDI…ACQL), 92-113 (SLEG…LGNL), 114-136 (TALT…ICQL), 138-158 (LRVL…ISTL), 159-181 (GSLR…LCSL), 182-204 (RSLR…LGDL), 206-226 (LVRL…FCRL), and 227-250 (RHLQ…CLKG). Residues Ser-279, Ser-281, Ser-304, Ser-307, Ser-309, and Ser-313 each carry the phosphoserine modification. Residues 329-528 (SELARDPRGP…PSSPESVLRP (200 aa)) are disordered. Positions 330-345 (ELARDPRGPRQPREDG) are enriched in basic and acidic residues. Residues 346-355 (AGDGDLEQID) are compositionally biased toward acidic residues. Basic and acidic residues-rich tracts occupy residues 357-371 (IDSH…RSAA) and 385-418 (DVEK…ERKQ). Phosphoserine is present on Ser-432. Low complexity-rich tracts occupy residues 440-453 (AAGA…TQAT) and 510-528 (RSSS…VLRP). A phosphoserine mark is found at Ser-511, Ser-513, Ser-517, Ser-521, and Ser-586. A Calponin-homology (CH) domain is found at 531–644 (FPQEKELISQ…VLEAVILVGG (114 aa)). Residues 655–675 (GLGGFLLFYVVFMLLLYVVYT) traverse the membrane as a helical segment.

As to expression, widely expressed across tissues, with the most abundant expression in spleen, testes, thymus, intestine, and blood. Expressed in macrophages.

It is found in the cell membrane. In terms of biological role, accessory protein that regulates signaling by multiple TLRs, acting as a broad-spanning regulator of the innate immune response. In macrophages, binds LPS and promotes proper docking of LPS in lipid raft membrane. May be required for lipid raft maintenance. The protein is Leucine-rich repeat and calponin homology domain-containing protein 4 (Lrch4) of Mus musculus (Mouse).